Reading from the N-terminus, the 303-residue chain is Small ribosomal subunit protein uS2 (303 aa).

The segment at 258–303 (ATLRENAVVTENEVKKTDEEEGASSEAARADAQNEEAVAKPGEEVE) is disordered. Residues 294–303 (AVAKPGEEVE) show a composition bias toward basic and acidic residues.

Belongs to the universal ribosomal protein uS2 family.

The sequence is that of Small ribosomal subunit protein uS2 from Bifidobacterium animalis subsp. lactis (strain AD011).